We begin with the raw amino-acid sequence, 406 residues long: Formate-dependent phosphoribosylglycinamide formyltransferase (406 aa).

Residues 27–28 (EL) and E87 contribute to the N(1)-(5-phospho-beta-D-ribosyl)glycinamide site. Residues R120, K162, 167–172 (SSGKGQ), 202–205 (EGFI), and E210 contribute to the ATP site. In terms of domain architecture, ATP-grasp spans 125-320 (RLAAETLGLP…EFELHARALL (196 aa)). Residues E279 and E291 each coordinate Mg(2+). Residues D298, K367, and 374 to 375 (RR) each bind N(1)-(5-phospho-beta-D-ribosyl)glycinamide.

This sequence belongs to the PurK/PurT family. In terms of assembly, homodimer.

It catalyses the reaction N(1)-(5-phospho-beta-D-ribosyl)glycinamide + formate + ATP = N(2)-formyl-N(1)-(5-phospho-beta-D-ribosyl)glycinamide + ADP + phosphate + H(+). The protein operates within purine metabolism; IMP biosynthesis via de novo pathway; N(2)-formyl-N(1)-(5-phospho-D-ribosyl)glycinamide from N(1)-(5-phospho-D-ribosyl)glycinamide (formate route): step 1/1. Functionally, involved in the de novo purine biosynthesis. Catalyzes the transfer of formate to 5-phospho-ribosyl-glycinamide (GAR), producing 5-phospho-ribosyl-N-formylglycinamide (FGAR). Formate is provided by PurU via hydrolysis of 10-formyl-tetrahydrofolate. The polypeptide is Formate-dependent phosphoribosylglycinamide formyltransferase (Bordetella parapertussis (strain 12822 / ATCC BAA-587 / NCTC 13253)).